We begin with the raw amino-acid sequence, 180 residues long: Photosystem II extrinsic protein V (180 aa).

The signal sequence occupies residues 1–40; it reads MFSKAFSFQKVFAPARRRLLVLLLAALMAGFGWGLAPVFA. 4 residues coordinate heme c: Cys73, Cys76, His77, and His128.

Belongs to the cytochrome c family. PsbV subfamily. As to quaternary structure, PSII is composed of 1 copy each of membrane proteins PsbA, PsbB, PsbC, PsbD, PsbE, PsbF, PsbH, PsbI, PsbJ, PsbK, PsbL, PsbM, PsbT, PsbX, PsbY, PsbZ, Psb30/Ycf12, peripheral proteins PsbO, CyanoQ (PsbQ), PsbU, PsbV and a large number of cofactors. It forms dimeric complexes. Heme c is required as a cofactor.

It localises to the cellular thylakoid membrane. Its function is as follows. One of the extrinsic, lumenal subunits of photosystem II (PSII). PSII is a light-driven water plastoquinone oxidoreductase, using light energy to abstract electrons from H(2)O, generating a proton gradient subsequently used for ATP formation. The extrinsic proteins stabilize the structure of photosystem II oxygen-evolving complex (OEC), the ion environment of oxygen evolution and protect the OEC against heat-induced inactivation. Low-potential cytochrome c that plays a role in the OEC of PSII. This chain is Photosystem II extrinsic protein V, found in Synechococcus sp. (strain JA-2-3B'a(2-13)) (Cyanobacteria bacterium Yellowstone B-Prime).